A 358-amino-acid chain; its full sequence is MRERLLAAEKVTAIRWQGGALHLLDQRLLPSEERWLACDNVAQVAAAIRDMAVRGASAIGIAAAYGLVLALEERLAEGGDWEMDLEDDFLTLAEARPTAANLFWALNRMRERLLCLRPEEDVLAALEAEAVAIHDSDREANLTMAQQGIELIRRHQGNAQALLTFGNAGALASGGFGTALGVIRAGYLEGMVERVYAGETRPWLQGSRLTGWELANEGIPVTLCADSALAHLMKTKGITWVVVGADCIAANGDMAGKIGTYQLAVSAMHHGVRFMVVAPSTSIDLNLATGEDIPLEERDADEWLDFGGTPVSPGVEVFNPVFDVTPADLIDVIVTERGIVERPDAAKLAQLVCRKRLH.

Residues 54–56 (RGA), R96, and Q205 contribute to the substrate site. D246 acts as the Proton donor in catalysis. 256 to 257 (GK) contacts substrate.

It belongs to the eIF-2B alpha/beta/delta subunits family. MtnA subfamily.

It carries out the reaction 5-(methylsulfanyl)-alpha-D-ribose 1-phosphate = 5-(methylsulfanyl)-D-ribulose 1-phosphate. Its pathway is amino-acid biosynthesis; L-methionine biosynthesis via salvage pathway; L-methionine from S-methyl-5-thio-alpha-D-ribose 1-phosphate: step 1/6. In terms of biological role, catalyzes the interconversion of methylthioribose-1-phosphate (MTR-1-P) into methylthioribulose-1-phosphate (MTRu-1-P). This chain is Methylthioribose-1-phosphate isomerase, found in Pseudomonas putida (strain ATCC 47054 / DSM 6125 / CFBP 8728 / NCIMB 11950 / KT2440).